The following is a 393-amino-acid chain: DNA-directed RNA polymerase subunit Rpo1C (393 aa).

Belongs to the RNA polymerase beta' chain family. In terms of assembly, part of the RNA polymerase complex.

It is found in the cytoplasm. The catalysed reaction is RNA(n) + a ribonucleoside 5'-triphosphate = RNA(n+1) + diphosphate. Its function is as follows. DNA-dependent RNA polymerase (RNAP) catalyzes the transcription of DNA into RNA using the four ribonucleoside triphosphates as substrates. Forms part of the jaw domain. In Halococcus morrhuae (Micrococcus morrhuae), this protein is DNA-directed RNA polymerase subunit Rpo1C.